The primary structure comprises 106 residues: Large ribosomal subunit protein eL42 (106 aa).

Zn(2+) is bound by residues Cys-12, Cys-17, Cys-74, and Cys-77.

The protein belongs to the eukaryotic ribosomal protein eL42 family. In terms of assembly, component of the large ribosomal subunit. Mature ribosomes consist of a small (40S) and a large (60S) subunit. The 40S subunit contains about 32 different proteins and 1 molecule of RNA (18S). The 60S subunit contains 45 different proteins and 3 molecules of RNA (25S, 5.8S and 5S). Requires Zn(2+) as cofactor.

Its subcellular location is the cytoplasm. Functionally, component of the ribosome, a large ribonucleoprotein complex responsible for the synthesis of proteins in the cell. The small ribosomal subunit (SSU) binds messenger RNAs (mRNAs) and translates the encoded message by selecting cognate aminoacyl-transfer RNA (tRNA) molecules. The large subunit (LSU) contains the ribosomal catalytic site termed the peptidyl transferase center (PTC), which catalyzes the formation of peptide bonds, thereby polymerizing the amino acids delivered by tRNAs into a polypeptide chain. The nascent polypeptides leave the ribosome through a tunnel in the LSU and interact with protein factors that function in enzymatic processing, targeting, and the membrane insertion of nascent chains at the exit of the ribosomal tunnel. The sequence is that of Large ribosomal subunit protein eL42 (RPL44) from Candida albicans (strain SC5314 / ATCC MYA-2876) (Yeast).